We begin with the raw amino-acid sequence, 368 residues long: MGFNTNLKEQVITFFSALSLSKDFFNFIWIAFSILILLLTITIGVLVLVWLERKISAGIQQRIGPEYAGPLGIIQALADGFKLLLKEDIIPSKGDNWLFNIGPAIVVIPVFLSYLVIPFGHNIILADLNIGVFFWIAISSIVPLGLLMAGYGSNNKYSFLGGLRAAAQSISYEIPLALCVLSISLQLSNSLSTVDIVEAQAKYGFWGWNVWRQPIGFLAFFIASLAECERLPFDLPEAEEELVAGYQTEYSGIKFGLFYVASYLNLLASSLFVTILYLGGWHFSIPFLLNSNYLEWVFSHGSNQVINIIIGIIIVLIKSYLFSFIAIMTRWTLPRVRMDQLLDLGWKFLLPIALGNLLLTASFQAFLL.

Helical transmembrane passes span 27–47, 97–117, 130–150, 269–289, 308–328, and 348–368; these read FIWI…GVLV, WLFN…YLVI, IGVF…LMAG, SSLF…PFLL, IIIG…IAIM, and FLLP…AFLL.

This sequence belongs to the complex I subunit 1 family. As to quaternary structure, NDH is composed of at least 16 different subunits, 5 of which are encoded in the nucleus.

It localises to the plastid. Its subcellular location is the chloroplast thylakoid membrane. The enzyme catalyses a plastoquinone + NADH + (n+1) H(+)(in) = a plastoquinol + NAD(+) + n H(+)(out). It carries out the reaction a plastoquinone + NADPH + (n+1) H(+)(in) = a plastoquinol + NADP(+) + n H(+)(out). Functionally, NDH shuttles electrons from NAD(P)H:plastoquinone, via FMN and iron-sulfur (Fe-S) centers, to quinones in the photosynthetic chain and possibly in a chloroplast respiratory chain. The immediate electron acceptor for the enzyme in this species is believed to be plastoquinone. Couples the redox reaction to proton translocation, and thus conserves the redox energy in a proton gradient. This is NAD(P)H-quinone oxidoreductase subunit 1, chloroplastic from Physcomitrium patens (Spreading-leaved earth moss).